A 520-amino-acid polypeptide reads, in one-letter code: Peptide chain release factor 3 (520 aa).

A tr-type G domain is found at 8-277; sequence ESRKTFAIIS…HAPMPNARQT (270 aa). GTP-binding positions include 17 to 24, 85 to 89, and 139 to 142; these read SHPDAGKT, DTPGH, and NKLD.

The protein belongs to the TRAFAC class translation factor GTPase superfamily. Classic translation factor GTPase family. PrfC subfamily.

Its subcellular location is the cytoplasm. Increases the formation of ribosomal termination complexes and stimulates activities of RF-1 and RF-2. It binds guanine nucleotides and has strong preference for UGA stop codons. It may interact directly with the ribosome. The stimulation of RF-1 and RF-2 is significantly reduced by GTP and GDP, but not by GMP. The chain is Peptide chain release factor 3 from Staphylococcus haemolyticus (strain JCSC1435).